The sequence spans 278 residues: Pantothenate synthetase (278 aa).

27 to 34 (MGYLHEGH) is an ATP binding site. His-34 serves as the catalytic Proton donor. Gln-58 is a binding site for (R)-pantoate. Gln-58 is a binding site for beta-alanine. 144-147 (GQKD) is an ATP binding site. Gln-150 is a binding site for (R)-pantoate. Residues Val-173 and 181–184 (MSSR) each bind ATP.

It belongs to the pantothenate synthetase family. Homodimer.

Its subcellular location is the cytoplasm. The catalysed reaction is (R)-pantoate + beta-alanine + ATP = (R)-pantothenate + AMP + diphosphate + H(+). The protein operates within cofactor biosynthesis; (R)-pantothenate biosynthesis; (R)-pantothenate from (R)-pantoate and beta-alanine: step 1/1. Functionally, catalyzes the condensation of pantoate with beta-alanine in an ATP-dependent reaction via a pantoyl-adenylate intermediate. The protein is Pantothenate synthetase of Roseiflexus castenholzii (strain DSM 13941 / HLO8).